The primary structure comprises 275 residues: 4-diphosphocytidyl-2-C-methyl-D-erythritol kinase (275 aa).

Lysine 14 is an active-site residue. 98-108 serves as a coordination point for ATP; the sequence is PMGAGLGGGSS. Aspartate 140 is an active-site residue.

Belongs to the GHMP kinase family. IspE subfamily.

It catalyses the reaction 4-CDP-2-C-methyl-D-erythritol + ATP = 4-CDP-2-C-methyl-D-erythritol 2-phosphate + ADP + H(+). Its pathway is isoprenoid biosynthesis; isopentenyl diphosphate biosynthesis via DXP pathway; isopentenyl diphosphate from 1-deoxy-D-xylulose 5-phosphate: step 3/6. In terms of biological role, catalyzes the phosphorylation of the position 2 hydroxy group of 4-diphosphocytidyl-2C-methyl-D-erythritol. This is 4-diphosphocytidyl-2-C-methyl-D-erythritol kinase from Francisella tularensis subsp. novicida (strain U112).